We begin with the raw amino-acid sequence, 462 residues long: ATP synthase subunit beta (462 aa).

151–158 provides a ligand contact to ATP; that stretch reads GGAGVGKT.

It belongs to the ATPase alpha/beta chains family. In terms of assembly, F-type ATPases have 2 components, CF(1) - the catalytic core - and CF(0) - the membrane proton channel. CF(1) has five subunits: alpha(3), beta(3), gamma(1), delta(1), epsilon(1). CF(0) has four main subunits: a(1), b(1), b'(1) and c(9-12).

The protein localises to the cell inner membrane. It catalyses the reaction ATP + H2O + 4 H(+)(in) = ADP + phosphate + 5 H(+)(out). Functionally, produces ATP from ADP in the presence of a proton gradient across the membrane. The catalytic sites are hosted primarily by the beta subunits. The protein is ATP synthase subunit beta of Chlorobium phaeobacteroides (strain DSM 266 / SMG 266 / 2430).